The following is a 379-amino-acid chain: Cytochrome b (379 aa).

4 helical membrane-spanning segments follow: residues 34-54 (FGSLLGICLITQILTGLLLAM), 78-99 (WFIRNLHANGASFFFICIYLHI), 114-134 (WNTGVILLLTLMATAFVGYVL), and 179-199 (FFALHFLLPFVIAGITLVHLT). The heme b site is built by histidine 84 and histidine 98. The heme b site is built by histidine 183 and histidine 197. Histidine 202 is an a ubiquinone binding site. The next 4 helical transmembrane spans lie at 227–247 (LKDILGFTLMFIPLLSLAFFS), 289–309 (LGGVLALAASVLILFLIPLLH), 321–341 (LSQLLFWFLVANLLILTWIGS), and 348–368 (FIIIGQVASFTYFLILLVLFP).

This sequence belongs to the cytochrome b family. As to quaternary structure, the cytochrome bc1 complex contains 11 subunits: 3 respiratory subunits (MT-CYB, CYC1 and UQCRFS1), 2 core proteins (UQCRC1 and UQCRC2) and 6 low-molecular weight proteins (UQCRH/QCR6, UQCRB/QCR7, UQCRQ/QCR8, UQCR10/QCR9, UQCR11/QCR10 and a cleavage product of UQCRFS1). This cytochrome bc1 complex then forms a dimer. The cofactor is heme b.

It is found in the mitochondrion inner membrane. Functionally, component of the ubiquinol-cytochrome c reductase complex (complex III or cytochrome b-c1 complex) that is part of the mitochondrial respiratory chain. The b-c1 complex mediates electron transfer from ubiquinol to cytochrome c. Contributes to the generation of a proton gradient across the mitochondrial membrane that is then used for ATP synthesis. This Struthio camelus (Common ostrich) protein is Cytochrome b (MT-CYB).